The chain runs to 166 residues: Ribonuclease H (166 aa).

Residues 5-147 (PRKRVALFTD…VDREARRQAQ (143 aa)) form the RNase H type-1 domain. Positions 14, 52, 74, and 139 each coordinate Mg(2+). The tract at residues 128–166 (GHTGHPENERVDREARRQAQSQAKTPCPPQAPTLFHEEA) is disordered. Residues 131–144 (GHPENERVDREARR) show a composition bias toward basic and acidic residues.

Belongs to the RNase H family. In terms of assembly, monomer. The cofactor is Mg(2+).

The protein localises to the cytoplasm. It carries out the reaction Endonucleolytic cleavage to 5'-phosphomonoester.. Its function is as follows. Endonuclease that specifically degrades the RNA of RNA-DNA hybrids. The polypeptide is Ribonuclease H (Thermus thermophilus (strain ATCC BAA-163 / DSM 7039 / HB27)).